The sequence spans 280 residues: Orotidine 5'-phosphate decarboxylase (280 aa).

Residues aspartate 40, 62-64 (KTH), 93-102 (DRKFVDIGNT), tyrosine 228, and arginine 246 contribute to the substrate site. The active-site Proton donor is lysine 95.

This sequence belongs to the OMP decarboxylase family.

The enzyme catalyses orotidine 5'-phosphate + H(+) = UMP + CO2. It participates in pyrimidine metabolism; UMP biosynthesis via de novo pathway; UMP from orotate: step 2/2. This is Orotidine 5'-phosphate decarboxylase (PYRG) from Solorina crocea.